We begin with the raw amino-acid sequence, 384 residues long: Putative glycosyltransferase EpsF (384 aa).

It belongs to the glycosyltransferase group 1 family. Glycosyltransferase 4 subfamily.

In terms of biological role, may be involved in the production of the exopolysaccharide (EPS) component of the extracellular matrix during biofilm formation. EPS is responsible for the adhesion of chains of cells into bundles. Required for biofilm maintenance. The chain is Putative glycosyltransferase EpsF (epsF) from Bacillus subtilis (strain 168).